The following is a 299-amino-acid chain: N-acetylmuramic acid 6-phosphate etherase (299 aa).

The region spanning 54–217 is the SIS domain; it reads TIAQYKKGGR…STITMVGVGK (164 aa). Residue Glu82 is the Proton donor of the active site. Glu113 is an active-site residue.

The protein belongs to the GCKR-like family. MurNAc-6-P etherase subfamily. Homodimer.

It catalyses the reaction N-acetyl-D-muramate 6-phosphate + H2O = N-acetyl-D-glucosamine 6-phosphate + (R)-lactate. Its pathway is amino-sugar metabolism; N-acetylmuramate degradation. Specifically catalyzes the cleavage of the D-lactyl ether substituent of MurNAc 6-phosphate, producing GlcNAc 6-phosphate and D-lactate. This Staphylococcus aureus (strain bovine RF122 / ET3-1) protein is N-acetylmuramic acid 6-phosphate etherase.